A 1268-amino-acid chain; its full sequence is Meiosis inhibitor protein 1 (1268 aa).

As to expression, strongly expressed in testis, weakly in brain, and not detected in spleen, liver, kidney, small intestine or colon.

Functionally, required for normal meiotic chromosome synapsis. May be involved in the formation of meiotic double-strand breaks (DSBs) in spermatocytes. The chain is Meiosis inhibitor protein 1 from Mus musculus (Mouse).